The sequence spans 123 residues: Small ribosomal subunit protein uS12 (123 aa).

Aspartate 89 is subject to 3-methylthioaspartic acid.

Belongs to the universal ribosomal protein uS12 family. Part of the 30S ribosomal subunit. Contacts proteins S8 and S17. May interact with IF1 in the 30S initiation complex.

Its function is as follows. With S4 and S5 plays an important role in translational accuracy. Functionally, interacts with and stabilizes bases of the 16S rRNA that are involved in tRNA selection in the A site and with the mRNA backbone. Located at the interface of the 30S and 50S subunits, it traverses the body of the 30S subunit contacting proteins on the other side and probably holding the rRNA structure together. The combined cluster of proteins S8, S12 and S17 appears to hold together the shoulder and platform of the 30S subunit. The chain is Small ribosomal subunit protein uS12 from Nitrobacter hamburgensis (strain DSM 10229 / NCIMB 13809 / X14).